A 176-amino-acid polypeptide reads, in one-letter code: Cytochrome b (176 aa).

3 helical membrane passes run 33-53 (FGSL…FLAM), 77-98 (WVLR…YLHV), and 113-133 (WNMG…GYVL). Residues histidine 83 and histidine 97 each coordinate heme b.

The protein belongs to the cytochrome b family. The cytochrome bc1 complex contains 11 subunits: 3 respiratory subunits (MT-CYB, CYC1 and UQCRFS1), 2 core proteins (UQCRC1 and UQCRC2) and 6 low-molecular weight proteins (UQCRH/QCR6, UQCRB/QCR7, UQCRQ/QCR8, UQCR10/QCR9, UQCR11/QCR10 and a cleavage product of UQCRFS1). This cytochrome bc1 complex then forms a dimer. It depends on heme b as a cofactor.

The protein localises to the mitochondrion inner membrane. Its function is as follows. Component of the ubiquinol-cytochrome c reductase complex (complex III or cytochrome b-c1 complex) that is part of the mitochondrial respiratory chain. The b-c1 complex mediates electron transfer from ubiquinol to cytochrome c. Contributes to the generation of a proton gradient across the mitochondrial membrane that is then used for ATP synthesis. The sequence is that of Cytochrome b (MT-CYB) from Lasionycteris noctivagans (Silver-haired bat).